Reading from the N-terminus, the 479-residue chain is Sulfate adenylyltransferase subunit 1 (479 aa).

Residues 25-239 (KSLLRFLTCG…EVLETVDIQR (215 aa)) form the tr-type G domain. The G1 stretch occupies residues 34-41 (GSVDDGKS). 34-41 (GSVDDGKS) lines the GTP pocket. Residues 92–96 (GITID) are G2. Residues 113 to 116 (DTPG) form a G3 region. Residues 113–117 (DTPGH) and 168–171 (NKMD) each bind GTP. The interval 168 to 171 (NKMD) is G4. The tract at residues 206 to 208 (SAL) is G5.

The protein belongs to the TRAFAC class translation factor GTPase superfamily. Classic translation factor GTPase family. CysN/NodQ subfamily. Heterodimer composed of CysD, the smaller subunit, and CysN.

The enzyme catalyses sulfate + ATP + H(+) = adenosine 5'-phosphosulfate + diphosphate. It functions in the pathway sulfur metabolism; hydrogen sulfide biosynthesis; sulfite from sulfate: step 1/3. In terms of biological role, with CysD forms the ATP sulfurylase (ATPS) that catalyzes the adenylation of sulfate producing adenosine 5'-phosphosulfate (APS) and diphosphate, the first enzymatic step in sulfur assimilation pathway. APS synthesis involves the formation of a high-energy phosphoric-sulfuric acid anhydride bond driven by GTP hydrolysis by CysN coupled to ATP hydrolysis by CysD. In Salmonella typhi, this protein is Sulfate adenylyltransferase subunit 1.